Reading from the N-terminus, the 203-residue chain is Thymidylate kinase (203 aa).

10 to 17 (GMDGAGKS) contributes to the ATP binding site.

The protein belongs to the thymidylate kinase family.

It catalyses the reaction dTMP + ATP = dTDP + ADP. Functionally, phosphorylation of dTMP to form dTDP in both de novo and salvage pathways of dTTP synthesis. The sequence is that of Thymidylate kinase from Methylobacillus flagellatus (strain ATCC 51484 / DSM 6875 / VKM B-1610 / KT).